We begin with the raw amino-acid sequence, 147 residues long: HETDPDGHVLNSLMLIVMKFQREFSNLKDAFMTVHKARSFGSGSERLYVTNKEVGNFEGLGEICRQAGGRIPSPQLKNQNKAFANVLERHNKEAYLVVGNSANFTNWAEGQPKKADGTCVKADTHGLWHSTSCDDNLLVVCEFYFIL.

Residues 62–143 enclose the C-type lectin domain; it reads EICRQAGGRI…DDNLLVVCEF (82 aa). 2 disulfide bridges follow: Cys-64-Cys-141 and Cys-119-Cys-133. An N-linked (GlcNAc...) asparagine glycan is attached at Asn-103.

The protein belongs to the alpha-type phospholipase A2 inhibitor family. In terms of assembly, homotrimer; non-covalently linked. Post-translationally, glycosylated. As to expression, expressed by the liver.

It is found in the secreted. Functionally, inhibits the enzymatic activity of the acidic phospholipase A2 (PLA2). The sequence is that of Phospholipase A2 inhibitor subunit A from Gloydius brevicaudus siniticus (Chinese mamushi).